Reading from the N-terminus, the 225-residue chain is tRNA (guanine-N(1)-)-methyltransferase (225 aa).

S-adenosyl-L-methionine is bound by residues G112 and 132-137 (IGDYVL).

Belongs to the RNA methyltransferase TrmD family. In terms of assembly, homodimer.

It is found in the cytoplasm. The catalysed reaction is guanosine(37) in tRNA + S-adenosyl-L-methionine = N(1)-methylguanosine(37) in tRNA + S-adenosyl-L-homocysteine + H(+). Its function is as follows. Specifically methylates guanosine-37 in various tRNAs. The sequence is that of tRNA (guanine-N(1)-)-methyltransferase from Bacteroides thetaiotaomicron (strain ATCC 29148 / DSM 2079 / JCM 5827 / CCUG 10774 / NCTC 10582 / VPI-5482 / E50).